A 194-amino-acid chain; its full sequence is Fe/S biogenesis protein NfuA (194 aa).

Cys-152 and Cys-155 together coordinate [4Fe-4S] cluster.

It belongs to the NfuA family. As to quaternary structure, homodimer. [4Fe-4S] cluster is required as a cofactor.

In terms of biological role, involved in iron-sulfur cluster biogenesis. Binds a 4Fe-4S cluster, can transfer this cluster to apoproteins, and thereby intervenes in the maturation of Fe/S proteins. Could also act as a scaffold/chaperone for damaged Fe/S proteins. In Pseudomonas aeruginosa (strain LESB58), this protein is Fe/S biogenesis protein NfuA.